Reading from the N-terminus, the 891-residue chain is Translation initiation factor IF-2 (891 aa).

The tract at residues 50 to 303 is disordered; sequence KKEHGSADES…TSMQHGFDKS (254 aa). 2 stretches are compositionally biased toward basic and acidic residues: residues 102–237 and 245–261; these read TLEE…KTAD and HAREAEDAADRKDEQQP. A tr-type G domain is found at 390 to 559; it reads GRAPVVTIMG…LLQSEVLELT (170 aa). The G1 stretch occupies residues 399 to 406; it reads GHVDHGKT. 399-406 is a binding site for GTP; it reads GHVDHGKT. The tract at residues 424 to 428 is G2; the sequence is GITQH. The interval 445–448 is G3; sequence DTPG. GTP is bound by residues 445–449 and 499–502; these read DTPGH and NKID. Residues 499 to 502 are G4; sequence NKID. The G5 stretch occupies residues 535–537; the sequence is SAK.

Belongs to the TRAFAC class translation factor GTPase superfamily. Classic translation factor GTPase family. IF-2 subfamily.

Its subcellular location is the cytoplasm. In terms of biological role, one of the essential components for the initiation of protein synthesis. Protects formylmethionyl-tRNA from spontaneous hydrolysis and promotes its binding to the 30S ribosomal subunits. Also involved in the hydrolysis of GTP during the formation of the 70S ribosomal complex. The sequence is that of Translation initiation factor IF-2 from Aliivibrio salmonicida (strain LFI1238) (Vibrio salmonicida (strain LFI1238)).